The sequence spans 456 residues: Bifunctional protein GlmU (456 aa).

Residues 1 to 229 (MTKKALSAVI…VMEVEGANNR (229 aa)) form a pyrophosphorylase region. Residues 11–14 (LAAG), K25, Q76, 81–82 (GT), 103–105 (YGD), G140, E154, N169, and N227 each bind UDP-N-acetyl-alpha-D-glucosamine. A Mg(2+)-binding site is contributed by D105. N227 provides a ligand contact to Mg(2+). Residues 230-250 (LQLAALERYLQNKQASKLLLE) are linker. Residues 251-456 (GVMIYDPARF…QGWQRPIKKK (206 aa)) are N-acetyltransferase. Positions 333 and 351 each coordinate UDP-N-acetyl-alpha-D-glucosamine. Residue H363 is the Proton acceptor of the active site. Residues Y366 and N377 each contribute to the UDP-N-acetyl-alpha-D-glucosamine site. Acetyl-CoA is bound by residues A380, 386–387 (NY), S405, A423, and R440.

This sequence in the N-terminal section; belongs to the N-acetylglucosamine-1-phosphate uridyltransferase family. In the C-terminal section; belongs to the transferase hexapeptide repeat family. In terms of assembly, homotrimer. Requires Mg(2+) as cofactor.

It localises to the cytoplasm. The enzyme catalyses alpha-D-glucosamine 1-phosphate + acetyl-CoA = N-acetyl-alpha-D-glucosamine 1-phosphate + CoA + H(+). It catalyses the reaction N-acetyl-alpha-D-glucosamine 1-phosphate + UTP + H(+) = UDP-N-acetyl-alpha-D-glucosamine + diphosphate. It participates in nucleotide-sugar biosynthesis; UDP-N-acetyl-alpha-D-glucosamine biosynthesis; N-acetyl-alpha-D-glucosamine 1-phosphate from alpha-D-glucosamine 6-phosphate (route II): step 2/2. The protein operates within nucleotide-sugar biosynthesis; UDP-N-acetyl-alpha-D-glucosamine biosynthesis; UDP-N-acetyl-alpha-D-glucosamine from N-acetyl-alpha-D-glucosamine 1-phosphate: step 1/1. It functions in the pathway bacterial outer membrane biogenesis; LPS lipid A biosynthesis. Functionally, catalyzes the last two sequential reactions in the de novo biosynthetic pathway for UDP-N-acetylglucosamine (UDP-GlcNAc). The C-terminal domain catalyzes the transfer of acetyl group from acetyl coenzyme A to glucosamine-1-phosphate (GlcN-1-P) to produce N-acetylglucosamine-1-phosphate (GlcNAc-1-P), which is converted into UDP-GlcNAc by the transfer of uridine 5-monophosphate (from uridine 5-triphosphate), a reaction catalyzed by the N-terminal domain. This Haemophilus influenzae (strain PittEE) protein is Bifunctional protein GlmU.